The primary structure comprises 65 residues: Large ribosomal subunit protein bL35 (65 aa).

It belongs to the bacterial ribosomal protein bL35 family.

The protein is Large ribosomal subunit protein bL35 of Psychrobacter sp. (strain PRwf-1).